Here is a 259-residue protein sequence, read N- to C-terminus: Thiazole synthase (259 aa).

Catalysis depends on K99, which acts as the Schiff-base intermediate with DXP. 1-deoxy-D-xylulose 5-phosphate is bound by residues G160, 186–187, and 208–209; these read AG and NT.

This sequence belongs to the ThiG family. In terms of assembly, homotetramer. Forms heterodimers with either ThiH or ThiS.

The protein resides in the cytoplasm. The catalysed reaction is [ThiS sulfur-carrier protein]-C-terminal-Gly-aminoethanethioate + 2-iminoacetate + 1-deoxy-D-xylulose 5-phosphate = [ThiS sulfur-carrier protein]-C-terminal Gly-Gly + 2-[(2R,5Z)-2-carboxy-4-methylthiazol-5(2H)-ylidene]ethyl phosphate + 2 H2O + H(+). The protein operates within cofactor biosynthesis; thiamine diphosphate biosynthesis. Functionally, catalyzes the rearrangement of 1-deoxy-D-xylulose 5-phosphate (DXP) to produce the thiazole phosphate moiety of thiamine. Sulfur is provided by the thiocarboxylate moiety of the carrier protein ThiS. In vitro, sulfur can be provided by H(2)S. The polypeptide is Thiazole synthase (Porphyromonas gingivalis (strain ATCC BAA-308 / W83)).